A 179-amino-acid polypeptide reads, in one-letter code: Large ribosomal subunit protein uL5 (179 aa).

Belongs to the universal ribosomal protein uL5 family. Part of the 50S ribosomal subunit; part of the 5S rRNA/L5/L18/L25 subcomplex. Contacts the 5S rRNA and the P site tRNA. Forms a bridge to the 30S subunit in the 70S ribosome.

This is one of the proteins that bind and probably mediate the attachment of the 5S RNA into the large ribosomal subunit, where it forms part of the central protuberance. In the 70S ribosome it contacts protein S13 of the 30S subunit (bridge B1b), connecting the 2 subunits; this bridge is implicated in subunit movement. Contacts the P site tRNA; the 5S rRNA and some of its associated proteins might help stabilize positioning of ribosome-bound tRNAs. This is Large ribosomal subunit protein uL5 from Francisella tularensis subsp. tularensis (strain SCHU S4 / Schu 4).